A 907-amino-acid chain; its full sequence is Potassium channel AKT3 (907 aa).

Topologically, residues 1 to 75 (MPTTKCAVPL…YDRRYELWNN (75 aa)) are cytoplasmic. Residues 76-96 (YLILLVVYSAWVTPFEFGFVP) form a helical membrane-spanning segment. At 97–102 (EPAGAL) the chain is on the extracellular side. The chain crosses the membrane as a helical span at residues 103 to 123 (AAADNAVNAFFAVDIVLTFFV). The Cytoplasmic portion of the chain corresponds to 124–146 (AYTDPKTFLLQDDPRKIALRYIT). Residues 147–167 (TWFVLDVVATIPTELARRILP) form a helical membrane-spanning segment. The Extracellular segment spans residues 168 to 174 (PDLRSYG). Residues 175-195 (FFGILRLWRLHRVGILFARLE) form a helical; Voltage-sensor membrane-spanning segment. At 196-209 (KDRKFSYFWVRCVK) the chain is on the cytoplasmic side. Residues 210–230 (LVCVTLFAVHCSACFYYLLAD) form a helical membrane-spanning segment. Residues 231-257 (RYPDPTNTWISAYMPNFHKASIWSRYV) lie on the Extracellular side of the membrane. Residues 258-277 (ASMYWSITTLSTVGYGDMHA) constitute an intramembrane region (pore-forming). The Extracellular portion of the chain corresponds to 278–288 (ENTGEMVFTTT). A helical transmembrane segment spans residues 289 to 309 (YMLFNLGLTAYIIGNMTNLVV). At 310 to 907 (HGTSRTRKFR…VPPENRSRNQ (598 aa)) the chain is on the cytoplasmic side. 388 to 512 (LFEGVSNDLI…TIVMNNLIQY (125 aa)) is an a nucleoside 3',5'-cyclic phosphate binding site. ANK repeat units follow at residues 539-568 (DFPI…DPNE), 572-601 (YGRT…DSNS), 605-634 (EGRV…DLSG), 636-665 (DAAP…DVSG), and 670-699 (DGTT…DADA). Disordered regions lie at residues 726–779 (ATRH…TPQR) and 801–824 (GGYR…SSPP). Over residues 754–776 (SSPSSSSRRGRTSSTSAASARST) the composition is skewed to low complexity. Over residues 803-812 (YRGGGGGGGA) the composition is skewed to gly residues. One can recognise a KHA domain in the interval 827–907 (RVAISCPESR…VPPENRSRNQ (81 aa)).

The protein belongs to the potassium channel family. Plant (TC 1.A.1.4) subfamily.

It localises to the membrane. In terms of biological role, probable inward-rectifying potassium channel. Assuming opened or closed conformations in response to the voltage difference across the membrane, the channel is activated by hyperpolarization. This is Potassium channel AKT3 from Oryza sativa subsp. japonica (Rice).